A 247-amino-acid chain; its full sequence is MTILFLTMVISYFGCMKAAPMKEANIRGQGGLAYPGVRTHGTLESVNGPKAGSRGLTSLADTFEHVIEELLDEDQKVRPNEENNKDADLYTSRVMLSSQVPLEPPLLFLLEEYKNYLDAANMSMRVRRHSDPARRGELSVCDSISEWVTAADKKTAVDMSGGTVTVLEKVPVSKGQLKQYFYETKCNPMGYTKEGCRGIDKRHWNSQCRTTQSYVRALTMDSKKRIGWRFIRIDTSCVCTLTIKRGR.

A signal peptide spans 1–18; it reads MTILFLTMVISYFGCMKA. A propeptide spanning residues 19–128 is cleaved from the precursor; it reads APMKEANIRG…AANMSMRVRR (110 aa). Asn-121 is a glycosylation site (N-linked (GlcNAc...) asparagine). Cystine bridges form between Cys-141-Cys-208, Cys-186-Cys-237, and Cys-196-Cys-239.

This sequence belongs to the NGF-beta family. In terms of assembly, monomers and homodimers. Binds to NTRK2/TRKB. Can form heterodimers with other neurotrophin family members, such as NTF3 and NTF4 (in vitro), but the physiological relevance of this is not clear. BDNF precursor form: interacts with the heterodimer formed by NGFR and SORCS2. In terms of processing, N-glycosylated and glycosulfated, contrary to mature BDNF. Mature BDNF is produced by proteolytic removal of the propeptide, catalyzed by a FURIN family member. In addition, the precursor form is proteolytically cleaved within the propeptide, but this is not an obligatory intermediate for the production of mature BDNF. Can be converted into mature BDNF by plasmin (PLG). As to expression, detected in blood plasma and in saliva (at protein level). Brain. Highly expressed in hippocampus, amygdala, cerebral cortex and cerebellum. Also expressed in heart, lung, skeletal muscle, testis, prostate and placenta.

The protein resides in the secreted. In terms of biological role, important signaling molecule that activates signaling cascades downstream of NTRK2. During development, promotes the survival and differentiation of selected neuronal populations of the peripheral and central nervous systems. Participates in axonal growth, pathfinding and in the modulation of dendritic growth and morphology. Major regulator of synaptic transmission and plasticity at adult synapses in many regions of the CNS. The versatility of BDNF is emphasized by its contribution to a range of adaptive neuronal responses including long-term potentiation (LTP), long-term depression (LTD), certain forms of short-term synaptic plasticity, as well as homeostatic regulation of intrinsic neuronal excitability. Functionally, important signaling molecule that activates signaling cascades downstream of NTRK2. Activates signaling cascades via the heterodimeric receptor formed by NGFR and SORCS2. Signaling via NGFR and SORCS2 plays a role in synaptic plasticity and long-term depression (LTD). Binding to NGFR and SORCS2 promotes neuronal apoptosis. Promotes neuronal growth cone collapse. This Homo sapiens (Human) protein is Neurotrophic factor BDNF precursor form.